The sequence spans 158 residues: Anaerobic nitrite reductase AHB2 (158 aa).

Positions 5–154 (GFTEKQEALV…LALAIKTEMK (150 aa)) constitute a Globin domain. The Homodimerization motif lies at 38–42 (EIAPA). The heme b site is built by serine 48, lysine 62, histidine 66, and histidine 101. The short motif at 108–120 (DPHFEVVKEALLR) is the Homodimerization element.

Belongs to the plant globin family. Unable to dimerize. Requires heme b as cofactor. Expressed in rosette leaves but not in roots.

It is found in the cytoplasm. The protein localises to the nucleus. The enzyme catalyses Fe(III)-heme b-[protein] + nitric oxide + H2O = Fe(II)-heme b-[protein] + nitrite + 2 H(+). In terms of biological role, phytoglobin that reduces nitrite to nitric oxide (NO) under anoxic conditions (e.g. during flooding or in waterlogged soil). May not function as an oxygen storage or transport protein. Has an unusually high affinity for O(2) through an hexacoordinate heme iron because of a very low dissociation constant. The sequence is that of Anaerobic nitrite reductase AHB2 from Arabidopsis thaliana (Mouse-ear cress).